The following is a 150-amino-acid chain: uncharacterized protein (150 aa).

The N-acetyltransferase domain occupies 4-149; it reads IQIRNYQPGD…TNFYMRYKPQ (146 aa).

This sequence belongs to the acetyltransferase family.

This is an uncharacterized protein from Escherichia coli (strain K12).